The primary structure comprises 619 residues: Dihydroxy-acid dehydratase (619 aa).

Residue D81 coordinates Mg(2+). Position 122 (C122) interacts with [2Fe-2S] cluster. Mg(2+) contacts are provided by D123 and K124. Position 124 is an N6-carboxylysine (K124). A [2Fe-2S] cluster-binding site is contributed by C198. Residue E494 coordinates Mg(2+). The active-site Proton acceptor is S520.

This sequence belongs to the IlvD/Edd family. In terms of assembly, homodimer. It depends on [2Fe-2S] cluster as a cofactor. The cofactor is Mg(2+).

The enzyme catalyses (2R)-2,3-dihydroxy-3-methylbutanoate = 3-methyl-2-oxobutanoate + H2O. It catalyses the reaction (2R,3R)-2,3-dihydroxy-3-methylpentanoate = (S)-3-methyl-2-oxopentanoate + H2O. It functions in the pathway amino-acid biosynthesis; L-isoleucine biosynthesis; L-isoleucine from 2-oxobutanoate: step 3/4. The protein operates within amino-acid biosynthesis; L-valine biosynthesis; L-valine from pyruvate: step 3/4. In terms of biological role, functions in the biosynthesis of branched-chain amino acids. Catalyzes the dehydration of (2R,3R)-2,3-dihydroxy-3-methylpentanoate (2,3-dihydroxy-3-methylvalerate) into 2-oxo-3-methylpentanoate (2-oxo-3-methylvalerate) and of (2R)-2,3-dihydroxy-3-methylbutanoate (2,3-dihydroxyisovalerate) into 2-oxo-3-methylbutanoate (2-oxoisovalerate), the penultimate precursor to L-isoleucine and L-valine, respectively. The polypeptide is Dihydroxy-acid dehydratase (Neisseria meningitidis serogroup A / serotype 4A (strain DSM 15465 / Z2491)).